The primary structure comprises 125 residues: Large ribosomal subunit protein bL12 (125 aa).

It belongs to the bacterial ribosomal protein bL12 family. Homodimer. Part of the ribosomal stalk of the 50S ribosomal subunit. Forms a multimeric L10(L12)X complex, where L10 forms an elongated spine to which 2 to 4 L12 dimers bind in a sequential fashion. Binds GTP-bound translation factors.

In terms of biological role, forms part of the ribosomal stalk which helps the ribosome interact with GTP-bound translation factors. Is thus essential for accurate translation. The polypeptide is Large ribosomal subunit protein bL12 (Chlorobium phaeobacteroides (strain DSM 266 / SMG 266 / 2430)).